We begin with the raw amino-acid sequence, 267 residues long: MSRISDRFASLKERGEKALVTFVTAGDPDLATTEKVVLELERAGADLIELGVPFSDPMADGPTIQLSSDRALASGTTLPAILELVSRLREKTQVPIVLMGYFNPIFAYGSERFAFDAAQAGVDALLVVDLPPEEAAELKGATDSCGLDLIFLLTPTSDGSRIASVARQGSGFIYYVSVTGVTGARSAVADDLAARVTEVRGALELPLVVGFGISTPEQAGEVARAADGVVVGSALVKYFEKYQGAELLEQLGGFVSALKQGVLKGSR.

Residues Glu49 and Asp60 each act as proton acceptor in the active site.

Belongs to the TrpA family. As to quaternary structure, tetramer of two alpha and two beta chains.

It carries out the reaction (1S,2R)-1-C-(indol-3-yl)glycerol 3-phosphate + L-serine = D-glyceraldehyde 3-phosphate + L-tryptophan + H2O. The protein operates within amino-acid biosynthesis; L-tryptophan biosynthesis; L-tryptophan from chorismate: step 5/5. Functionally, the alpha subunit is responsible for the aldol cleavage of indoleglycerol phosphate to indole and glyceraldehyde 3-phosphate. This is Tryptophan synthase alpha chain from Citrifermentans bemidjiense (strain ATCC BAA-1014 / DSM 16622 / JCM 12645 / Bem) (Geobacter bemidjiensis).